Reading from the N-terminus, the 719-residue chain is Polyribonucleotide nucleotidyltransferase (719 aa).

Residues Asp-491 and Asp-497 each coordinate Mg(2+). One can recognise a KH domain in the interval 558-617 (PRMLTIKINPEKIRDVIGKGGATIRALTEETGTQIDISDDGTIVIASVDEAQAKEAQRRI). Residues 627–695 (GQVYDGSVLR…DKGRLRLSVK (69 aa)) enclose the S1 motif domain.

The protein belongs to the polyribonucleotide nucleotidyltransferase family. Mg(2+) is required as a cofactor.

Its subcellular location is the cytoplasm. The enzyme catalyses RNA(n+1) + phosphate = RNA(n) + a ribonucleoside 5'-diphosphate. Functionally, involved in mRNA degradation. Catalyzes the phosphorolysis of single-stranded polyribonucleotides processively in the 3'- to 5'-direction. The protein is Polyribonucleotide nucleotidyltransferase of Bordetella petrii (strain ATCC BAA-461 / DSM 12804 / CCUG 43448).